The primary structure comprises 189 residues: Large ribosomal subunit protein uL5 (189 aa).

It belongs to the universal ribosomal protein uL5 family. As to quaternary structure, part of the 50S ribosomal subunit; part of the 5S rRNA/L5/L18/L25 subcomplex. Contacts the 5S rRNA and the P site tRNA. Forms a bridge to the 30S subunit in the 70S ribosome.

This is one of the proteins that bind and probably mediate the attachment of the 5S RNA into the large ribosomal subunit, where it forms part of the central protuberance. In the 70S ribosome it contacts protein S13 of the 30S subunit (bridge B1b), connecting the 2 subunits; this bridge is implicated in subunit movement. Contacts the P site tRNA; the 5S rRNA and some of its associated proteins might help stabilize positioning of ribosome-bound tRNAs. The protein is Large ribosomal subunit protein uL5 of Parafrankia sp. (strain EAN1pec).